The following is a 421-amino-acid chain: Phosphatidylinositol 5-phosphate 4-kinase type-2 gamma (421 aa).

A2 is subject to N-acetylalanine. Phosphoserine is present on S26. Residues 43–420 form the PIPK domain; sequence AADPLVGVFL…RFLDFITNIF (378 aa). Positions 69-75 are required for interaction with PIP5K1A; the sequence is VMLLPDD. S349 carries the post-translational modification Phosphoserine.

In terms of assembly, interacts with PIP5K1A; the interaction inhibits PIP5K1A kinase activity. In terms of processing, phosphorylated, phosphorylation is induced by EGF.

It localises to the endoplasmic reticulum. It is found in the cytoplasm. It carries out the reaction a 1,2-diacyl-sn-glycero-3-phospho-(1D-myo-inositol-5-phosphate) + ATP = a 1,2-diacyl-sn-glycero-3-phospho-(1D-myo-inositol-4,5-bisphosphate) + ADP + H(+). It catalyses the reaction 1,2-dihexadecanoyl-sn-glycero-3-phospho-(1D-myo-inositol-5-phosphate) + ATP = 1,2-dihexadecanoyl-sn-glycero-3-phospho-(1D-myo-inositol-4,5-bisphosphate) + ADP + H(+). The enzyme catalyses 1,2-dihexadecanoyl-sn-glycero-3-phospho-(1D-myo-inositol-5-phosphate) + GTP = 1,2-dihexadecanoyl-sn-glycero-3-phospho-(1D-myo-inositol-4,5-bisphosphate) + GDP + H(+). In terms of biological role, phosphatidylinositol 5-phosphate 4-kinase with low enzymatic activity. May be a GTP sensor, has higher GTP-dependent kinase activity than ATP-dependent kinase activity. PIP4Ks negatively regulate insulin signaling through a catalytic-independent mechanism. They interact with PIP5Ks and suppress PIP5K-mediated PtdIns(4,5)P2 synthesis and insulin-dependent conversion to PtdIns(3,4,5)P3. This chain is Phosphatidylinositol 5-phosphate 4-kinase type-2 gamma (PIP4K2C), found in Pongo abelii (Sumatran orangutan).